The primary structure comprises 544 residues: Chaperonin GroEL (544 aa).

Residues 30-33 (TLGP), K51, 87-91 (DGTTT), G415, 481-483 (DAL), and D497 contribute to the ATP site.

The protein belongs to the chaperonin (HSP60) family. As to quaternary structure, forms a cylinder of 14 subunits composed of two heptameric rings stacked back-to-back. Interacts with the co-chaperonin GroES.

It localises to the cytoplasm. It catalyses the reaction ATP + H2O + a folded polypeptide = ADP + phosphate + an unfolded polypeptide.. Its function is as follows. Together with its co-chaperonin GroES, plays an essential role in assisting protein folding. The GroEL-GroES system forms a nano-cage that allows encapsulation of the non-native substrate proteins and provides a physical environment optimized to promote and accelerate protein folding. The polypeptide is Chaperonin GroEL (Chlamydia trachomatis serovar A (strain ATCC VR-571B / DSM 19440 / HAR-13)).